A 252-amino-acid polypeptide reads, in one-letter code: Aspartate/glutamate leucyltransferase (252 aa).

The protein belongs to the R-transferase family. Bpt subfamily.

It localises to the cytoplasm. It catalyses the reaction N-terminal L-glutamyl-[protein] + L-leucyl-tRNA(Leu) = N-terminal L-leucyl-L-glutamyl-[protein] + tRNA(Leu) + H(+). The enzyme catalyses N-terminal L-aspartyl-[protein] + L-leucyl-tRNA(Leu) = N-terminal L-leucyl-L-aspartyl-[protein] + tRNA(Leu) + H(+). In terms of biological role, functions in the N-end rule pathway of protein degradation where it conjugates Leu from its aminoacyl-tRNA to the N-termini of proteins containing an N-terminal aspartate or glutamate. This is Aspartate/glutamate leucyltransferase from Hyphomonas neptunium (strain ATCC 15444).